The following is a 100-amino-acid chain: Aspartyl/glutamyl-tRNA(Asn/Gln) amidotransferase subunit C (100 aa).

It belongs to the GatC family. As to quaternary structure, heterotrimer of A, B and C subunits.

The catalysed reaction is L-glutamyl-tRNA(Gln) + L-glutamine + ATP + H2O = L-glutaminyl-tRNA(Gln) + L-glutamate + ADP + phosphate + H(+). It catalyses the reaction L-aspartyl-tRNA(Asn) + L-glutamine + ATP + H2O = L-asparaginyl-tRNA(Asn) + L-glutamate + ADP + phosphate + 2 H(+). Its function is as follows. Allows the formation of correctly charged Asn-tRNA(Asn) or Gln-tRNA(Gln) through the transamidation of misacylated Asp-tRNA(Asn) or Glu-tRNA(Gln) in organisms which lack either or both of asparaginyl-tRNA or glutaminyl-tRNA synthetases. The reaction takes place in the presence of glutamine and ATP through an activated phospho-Asp-tRNA(Asn) or phospho-Glu-tRNA(Gln). The sequence is that of Aspartyl/glutamyl-tRNA(Asn/Gln) amidotransferase subunit C from Streptococcus suis (strain 98HAH33).